The chain runs to 355 residues: Guanine nucleotide-binding protein G(i) subunit alpha-2 (355 aa).

Glycine 2 carries the N-myristoyl glycine lipid modification. A lipid anchor (S-palmitoyl cysteine) is attached at cysteine 3. The region spanning 32-355 (REVKLLLLGA…KNNLKDCGLF (324 aa)) is the G-alpha domain. A G1 motif region spans residues 35–48 (KLLLLGAGESGKST). GTP contacts are provided by residues 40 to 47 (GAGESGKS), 176 to 182 (LRTRVKT), 201 to 205 (DVGGQ), 270 to 273 (NKKD), and alanine 327. Mg(2+) contacts are provided by serine 47 and threonine 182. The interval 174–182 (DVLRTRVKT) is G2 motif. A G3 motif region spans residues 197–206 (FKMFDVGGQR). The interval 266–273 (ILFLNKKD) is G4 motif. The segment at 325–330 (TCATDT) is G5 motif.

The protein belongs to the G-alpha family. G(i/o/t/z) subfamily. G proteins are composed of 3 units; alpha, beta and gamma. The alpha chain contains the guanine nucleotide binding site. In this context, interacts with GNB2. Interacts with UNC5B. Interacts with GPSM1. Interacts with RGS12 and RGS14. Interacts (inactive GDP-bound form) with NUCB1 (via GBA motif); the interaction leads to activation of GNAI3. Interacts (inactive GDP-bound form) with CCDC88C/DAPLE (via GBA motif). Interacts (inactive GDP-bound form) with CCDC8A/GIV (via GBA motif). As to expression, ubiquitously expressed. Most abundant in the lung and in the spleen.

The protein resides in the cytoplasm. The protein localises to the cytoskeleton. It localises to the microtubule organizing center. It is found in the centrosome. Its subcellular location is the cell membrane. The protein resides in the membrane. In terms of biological role, guanine nucleotide-binding proteins (G proteins) are involved as modulators or transducers in various transmembrane signaling systems. The G(i) proteins are involved in hormonal regulation of adenylate cyclase: they inhibit the cyclase in response to beta-adrenergic stimuli. May play a role in cell division. The chain is Guanine nucleotide-binding protein G(i) subunit alpha-2 (GNAI2) from Cavia porcellus (Guinea pig).